A 518-amino-acid chain; its full sequence is Arp2/3 complex-activating protein rickA (518 aa).

The tract at residues 310-518 (SAAQLQSAET…ERNAKQSQQR (209 aa)) is disordered. 2 stretches are compositionally biased toward pro residues: residues 344 to 354 (TPPPAPPPPMP) and 382 to 401 (VPPPPPPPMPTGNVPPPPPV). Polar residues predominate over residues 418-430 (QPRPAVDTTNLMK). Residues 424-441 (DTTNLMKQIQGGFNLKKI) form the WH2 domain. Residues 439–461 (KKIEYGEDGKPIPKNKEDTKETS) are compositionally biased toward basic and acidic residues. Polar residues predominate over residues 488-498 (GTDSGWASDVS).

As to quaternary structure, homodimer.

It is found in the cell surface. Its function is as follows. Recruits and activates the Arp2/3 complex, which in turn leads to actin polymerization, promoting Rickettsia motility during infection. The sequence is that of Arp2/3 complex-activating protein rickA (rickA) from Rickettsia bellii (strain RML369-C).